The primary structure comprises 126 residues: MAGSALEALLVGIGAIPGAWLRLKAVNHFEPMVPKKHWGTFAVNVIACFGLGLVLALYQSCSAKTGLALLIGVGFFGSLSTFSTFAVELLNELRAGRPFVSLVLALASIAAGLCAAGVGYGLGAYG.

4 helical membrane passes run 1–21 (MAGS…GAWL), 38–58 (WGTF…LALY), 67–87 (LALL…TFAV), and 99–119 (FVSL…AGVG). Na(+) is bound by residues Gly77 and Ser80.

The protein belongs to the fluoride channel Fluc/FEX (TC 1.A.43) family.

It is found in the cell inner membrane. The enzyme catalyses fluoride(in) = fluoride(out). Its activity is regulated as follows. Na(+) is not transported, but it plays an essential structural role and its presence is essential for fluoride channel function. Functionally, fluoride-specific ion channel. Important for reducing fluoride concentration in the cell, thus reducing its toxicity. This is Fluoride-specific ion channel FluC 1 from Synechococcus sp. (strain CC9902).